The sequence spans 291 residues: Quinol oxidase subunit 2 (291 aa).

A signal peptide spans 1-28 (MQLKKAFWKLASLLPLSLLLFLGGCDKK). The next 2 helical transmembrane spans lie at 49 to 69 (SFLLMSLIIAIVFILFTVILI) and 91 to 111 (LEIIWTLVPVIIVIALSIPTV).

The protein belongs to the cytochrome c oxidase subunit 2 family.

It localises to the cell membrane. The enzyme catalyses 2 a quinol + O2 = 2 a quinone + 2 H2O. Functionally, catalyzes quinol oxidation with the concomitant reduction of oxygen to water. Subunit II transfers the electrons from a quinol to the binuclear center of the catalytic subunit I. This chain is Quinol oxidase subunit 2, found in Bacillus anthracis.